Reading from the N-terminus, the 609-residue chain is Dihydroxy-acid dehydratase (609 aa).

Asp-81 is a binding site for Mg(2+). Cys-122 provides a ligand contact to [2Fe-2S] cluster. 2 residues coordinate Mg(2+): Asp-123 and Lys-124. Residue Lys-124 is modified to N6-carboxylysine. Cys-195 is a binding site for [2Fe-2S] cluster. Mg(2+) is bound at residue Glu-491. Ser-517 acts as the Proton acceptor in catalysis.

The protein belongs to the IlvD/Edd family. Homodimer. Requires [2Fe-2S] cluster as cofactor. Mg(2+) serves as cofactor.

It carries out the reaction (2R)-2,3-dihydroxy-3-methylbutanoate = 3-methyl-2-oxobutanoate + H2O. The enzyme catalyses (2R,3R)-2,3-dihydroxy-3-methylpentanoate = (S)-3-methyl-2-oxopentanoate + H2O. The protein operates within amino-acid biosynthesis; L-isoleucine biosynthesis; L-isoleucine from 2-oxobutanoate: step 3/4. It functions in the pathway amino-acid biosynthesis; L-valine biosynthesis; L-valine from pyruvate: step 3/4. In terms of biological role, functions in the biosynthesis of branched-chain amino acids. Catalyzes the dehydration of (2R,3R)-2,3-dihydroxy-3-methylpentanoate (2,3-dihydroxy-3-methylvalerate) into 2-oxo-3-methylpentanoate (2-oxo-3-methylvalerate) and of (2R)-2,3-dihydroxy-3-methylbutanoate (2,3-dihydroxyisovalerate) into 2-oxo-3-methylbutanoate (2-oxoisovalerate), the penultimate precursor to L-isoleucine and L-valine, respectively. This chain is Dihydroxy-acid dehydratase, found in Acinetobacter baumannii (strain AB0057).